Reading from the N-terminus, the 502-residue chain is Glycerol kinase (502 aa).

Thr-14 provides a ligand contact to ADP. The ATP site is built by Thr-14, Thr-15, and Ser-16. Thr-14 contributes to the sn-glycerol 3-phosphate binding site. Arg-18 provides a ligand contact to ADP. Residues Arg-84, Glu-85, Tyr-136, and Asp-246 each coordinate sn-glycerol 3-phosphate. Glycerol is bound by residues Arg-84, Glu-85, Tyr-136, Asp-246, and Gln-247. ADP is bound by residues Thr-268 and Gly-311. ATP is bound by residues Thr-268, Gly-311, Gln-315, and Gly-412. ADP-binding residues include Gly-412 and Asn-416.

Belongs to the FGGY kinase family. Homotetramer and homodimer (in equilibrium). Heterodimer with EIIA-Glc. Binds 1 zinc ion per glycerol kinase EIIA-Glc dimer. The zinc ion is important for dimerization.

It catalyses the reaction glycerol + ATP = sn-glycerol 3-phosphate + ADP + H(+). The protein operates within polyol metabolism; glycerol degradation via glycerol kinase pathway; sn-glycerol 3-phosphate from glycerol: step 1/1. Activity of this regulatory enzyme is affected by several metabolites. Allosterically and non-competitively inhibited by fructose 1,6-bisphosphate (FBP) and unphosphorylated phosphocarrier protein EIIA-Glc (III-Glc), an integral component of the bacterial phosphotransferase (PTS) system. Its function is as follows. Key enzyme in the regulation of glycerol uptake and metabolism. Catalyzes the phosphorylation of glycerol to yield sn-glycerol 3-phosphate. This is Glycerol kinase from Escherichia coli O127:H6 (strain E2348/69 / EPEC).